Reading from the N-terminus, the 564-residue chain is Efflux pump hmp6 (564 aa).

Residues 1–25 (MEKHAEPEKSLGDKEFQEKELHEKP) are compositionally biased toward basic and acidic residues. Residues 1–46 (MEKHAEPEKSLGDKEFQEKELHEKPAPAASEDISGDSSVNKEDGPD) form a disordered region. 8 helical membrane-spanning segments follow: residues 58 to 78 (LAVV…DTTI), 96 to 118 (VGWY…GKLY), 125 to 145 (IVFT…GVAP), 156 to 176 (IAGL…IHSV), 186 to 206 (GMIV…GGAF), 214 to 234 (WCFY…LFFF), 259 to 279 (FGTF…QMGG), and 289 to 309 (IIVL…VQFF). N-linked (GlcNAc...) asparagine glycosylation is found at N312 and N322. Helical transmembrane passes span 330-350 (IYMF…PIWF), 361-383 (SGIR…GALV), 395-415 (ASVV…VDAS), and 452-472 (IGTA…VSAA).

Belongs to the major facilitator superfamily. TCR/Tet family.

Its subcellular location is the cell membrane. Efflux pump that might be required for efficient secretion of hypothemycin or other secondary metabolies produced by the hypothemycin gene cluster. This chain is Efflux pump hmp6, found in Hypomyces subiculosus (Nectria subiculosa).